The primary structure comprises 279 residues: Putative polysaccharide deacetylase YxkH (279 aa).

The N-terminal stretch at 1–19 (MKRLFLSIFLLGSCLALAA) is a signal peptide. C20 carries the N-palmitoyl cysteine lipid modification. Residue C20 is the site of S-diacylglycerol cysteine attachment. The disordered stretch occupies residues 29-51 (QPMPKAEQKKPEKKAVQVQKKED). The segment covering 34-51 (AEQKKPEKKAVQVQKKED) has biased composition (basic and acidic residues). The region spanning 119 to 279 (KCVLITFDDG…AFGAYIESMK (161 aa)) is the NodB homology domain.

The protein belongs to the polysaccharide deacetylase family.

The protein localises to the cell membrane. The sequence is that of Putative polysaccharide deacetylase YxkH (yxkH) from Bacillus subtilis (strain 168).